Consider the following 136-residue polypeptide: Large ribosomal subunit protein uL22 (136 aa).

Belongs to the universal ribosomal protein uL22 family. In terms of assembly, part of the 50S ribosomal subunit.

In terms of biological role, this protein binds specifically to 23S rRNA; its binding is stimulated by other ribosomal proteins, e.g. L4, L17, and L20. It is important during the early stages of 50S assembly. It makes multiple contacts with different domains of the 23S rRNA in the assembled 50S subunit and ribosome. Its function is as follows. The globular domain of the protein is located near the polypeptide exit tunnel on the outside of the subunit, while an extended beta-hairpin is found that lines the wall of the exit tunnel in the center of the 70S ribosome. The protein is Large ribosomal subunit protein uL22 of Bacteroides fragilis (strain ATCC 25285 / DSM 2151 / CCUG 4856 / JCM 11019 / LMG 10263 / NCTC 9343 / Onslow / VPI 2553 / EN-2).